The primary structure comprises 382 residues: MKCAALITEYNPFHNGHVYHAQQARQIADADVTIAIMSGQFVMRGEPAVYNKFIRTQMALSTCDLVVELPAYAALSAGEYFAEFGVKVADYMNADALVFGSESGSIQAFEELALQINHIEEHPEFQIKLREGKSYPRIISELLGEPPLLQTPNNILGLSYVQAILKSAPTIQPFSIQRHKTEHHNQAISDNHFASGTAIRHALNTEDKMWEQVVPNSIHELYAKPHMNTNQLFPYLKYKILSTSSDDLRAIHTISEGFEHRLKSSISTSDNFEQLMNQLKTKRYTYTRIQRMLMNVLLNFKQQDKPTTLNAVRILGMNETGQRYLKQLKQDFPERRFITNVNKTTAPYFKPEIKATEIYNLISGQTQTDFNTPVIRVKNKEK.

ATP is bound by residues 7 to 20 (ITEYNPFHNGHVYH), glycine 100, asparagine 153, and arginine 178.

Belongs to the TmcAL family.

Its subcellular location is the cytoplasm. The catalysed reaction is cytidine(34) in elongator tRNA(Met) + acetate + ATP = N(4)-acetylcytidine(34) in elongator tRNA(Met) + AMP + diphosphate. Its function is as follows. Catalyzes the formation of N(4)-acetylcytidine (ac(4)C) at the wobble position of elongator tRNA(Met), using acetate and ATP as substrates. First activates an acetate ion to form acetyladenylate (Ac-AMP) and then transfers the acetyl group to tRNA to form ac(4)C34. This chain is tRNA(Met) cytidine acetate ligase, found in Staphylococcus carnosus (strain TM300).